Reading from the N-terminus, the 531-residue chain is Acyl-CoA ligase azaF (531 aa).

188–199 (RLFSSGTTGLPK) is a binding site for AMP. The segment at 449 to 525 (EVEGVLRNHP…DAIPRNASGK (77 aa)) is AMP-binding.

It belongs to the ATP-dependent AMP-binding enzyme family.

It functions in the pathway secondary metabolite biosynthesis. Functionally, acyl-CoA ligase; part of the gene cluster that mediates the biosynthesis of azaphilones, a class of fungal metabolites characterized by a highly oxygenated pyrano-quinone bicyclic core and exhibiting a broad range of bioactivities. In the first step, the non-reducing polyketide synthase azaA forms the hexaketide precursor from successive condensations of five malonyl-CoA units, presumably with a simple acetyl-CoA starter unit. The reactive polyketide chain then undergoes a PT-mediated C2-C7 cyclization to afford the aromatic ring and is eventually released as an aldehyde through the R-domain. The putative ketoreductase azaE is proposed to catalyze the reduction of the terminal ketone resulting in the early culture product FK17-P2a. The monooxygenase azaH was demonstrated to be the only enzyme required to convert FK17-P2a to azanigerone E. AzaH first hydroxylates the benzaldehyde intermediate FK17-P2a at C4, which triggers the formation of the pyran-ring to afford azanigerone E. In parallel, the 2,4-dimethylhexanoyl chain is synthesized by the HR-PKS azaB and is proposed to be transferred to the C4-hydroxyl of azanigerone E by the acyltransferase azaD directly from the ACP domain of azaB. Alternatively, the 2,4-dimethyl-hexanoyl chain may be offloaded from the HR-PKS as a carboxylic acid and converted to an acyl-CoA by azaF. The resulting acyl-CoA molecule could then be taken up as a substrate by AzaD to form azanigerone B. To yield the carboxylic acid substituent in azanigerone A, the hydroxypropyl side chain of azanigerone B would need to undergo a C-C oxidative cleavage catalyzed by cytochrome P450 AzaI. AzaI is proposed to act on a vicinal diol that leads to a C-C bond scission either through an alkoxyradical intermediate or a peroxy complex. In the biosynthesis of azanigerone A, azanigerone B first undergoes hydroxylation at C10, possibly catalyzed by one of the two FAD-dependent monooxygenases encoded in the cluster, azaG or azaL, resulting in the vicinal diol azanigerone C. Oxidative cleavage of azanigerone C by azaI would yield the corresponding aldehyde derivative of azanigerone A. Finally, the dehydrogenase azaJ is proposed to convert the aldehyde functional group into the carboxylic acid, completing the conversion from azanigerone B to azanigerone A. Alternatively, the oxidation of aldehyde to carboxylic acid may be catalyzed by the same P450 enzyme azaI via consecutive oxidation or by endogenous alcohol dehydrogenase. This chain is Acyl-CoA ligase azaF, found in Aspergillus niger (strain ATCC 1015 / CBS 113.46 / FGSC A1144 / LSHB Ac4 / NCTC 3858a / NRRL 328 / USDA 3528.7).